Reading from the N-terminus, the 205-residue chain is Small ribosomal subunit protein uS4 (205 aa).

The interval 20-46 (WGRSKSPVNRREYGPGQHGQRRKGKLS) is disordered. Positions 94 to 157 (RRLDAVVYRA…RQLTLVLEAS (64 aa)) constitute an S4 RNA-binding domain.

The protein belongs to the universal ribosomal protein uS4 family. As to quaternary structure, part of the 30S ribosomal subunit. Contacts protein S5. The interaction surface between S4 and S5 is involved in control of translational fidelity.

Functionally, one of the primary rRNA binding proteins, it binds directly to 16S rRNA where it nucleates assembly of the body of the 30S subunit. Its function is as follows. With S5 and S12 plays an important role in translational accuracy. This is Small ribosomal subunit protein uS4 from Beijerinckia indica subsp. indica (strain ATCC 9039 / DSM 1715 / NCIMB 8712).